Reading from the N-terminus, the 545-residue chain is Purple acid phosphatase 13 (545 aa).

The signal sequence occupies residues Met-1–Gly-25. Residues Asn-125 and Asn-145 are each glycosylated (N-linked (GlcNAc...) asparagine). Asp-203 contributes to the Fe cation binding site. The N-linked (GlcNAc...) asparagine glycan is linked to Asn-209. Tyr-233 is a binding site for Fe cation. Asn-240, Asn-254, Asn-306, Asn-321, Asn-351, and Asn-367 each carry an N-linked (GlcNAc...) asparagine glycan. His-389 serves as the catalytic Proton donor. His-416 provides a ligand contact to Zn(2+). Residue His-416–Asp-418 coordinates substrate. N-linked (GlcNAc...) asparagine glycosylation is found at Asn-428, Asn-466, Asn-475, and Asn-510.

Belongs to the metallophosphoesterase superfamily. Purple acid phosphatase family. Homodimer. It depends on Fe cation as a cofactor. The cofactor is Zn(2+). As to expression, expressed in stems, leaves, flowers and siliques.

It is found in the secreted. The catalysed reaction is a phosphate monoester + H2O = an alcohol + phosphate. The sequence is that of Purple acid phosphatase 13 (PAP13) from Arabidopsis thaliana (Mouse-ear cress).